Here is a 747-residue protein sequence, read N- to C-terminus: Protein O-mannosyl-transferase 1 (747 aa).

Helical transmembrane passes span 30-50 (PLVV…LGLL), 90-110 (FGHM…NFLW), 121-141 (VPVW…VPMA), 176-196 (LLES…LKFF), 205-225 (SVHW…AVGI), 228-248 (MGIF…WHLI), and 267-287 (VALL…HLML). MIR domains follow at residues 318–381 (PLEV…VKDP), 392–449 (PRPV…LDIV), and 453–513 (SNQD…VEEH). N435, N471, and N539 each carry an N-linked (GlcNAc...) asparagine glycan. 3 consecutive transmembrane segments (helical) span residues 597 to 617 (IVIW…FFWY), 636 to 656 (WVLA…PFFL), and 660 to 680 (MLFL…LPIV).

It belongs to the glycosyltransferase 39 family.

The protein localises to the endoplasmic reticulum membrane. It carries out the reaction a di-trans,poly-cis-dolichyl beta-D-mannosyl phosphate + L-seryl-[protein] = 3-O-(alpha-D-mannosyl)-L-seryl-[protein] + a di-trans,poly-cis-dolichyl phosphate + H(+). The enzyme catalyses a di-trans,poly-cis-dolichyl beta-D-mannosyl phosphate + L-threonyl-[protein] = 3-O-(alpha-D-mannosyl)-L-threonyl-[protein] + a di-trans,poly-cis-dolichyl phosphate + H(+). It participates in protein modification; protein glycosylation. Its function is as follows. Transfers mannosyl residues to the hydroxyl group of serine or threonine residues. Coexpression of both POMT1 and POMT2 is necessary for enzyme activity, expression of either POMT1 or POMT2 alone is insufficient. Essentially dedicated to O-mannosylation of alpha-DAG1 and few other proteins but not of cadherins and protocaherins. This chain is Protein O-mannosyl-transferase 1 (Pomt1), found in Rattus norvegicus (Rat).